The following is a 150-amino-acid chain: Transcriptional repressor NrdR (150 aa).

The segment at 3–34 (CPFCNFEESKVVDSRATDDNTTIRRRRECLNC) is a zinc-finger region. An ATP-cone domain is found at 49 to 139 (VLVVKKDLAR…VYRQFKDINT (91 aa)).

It belongs to the NrdR family. The cofactor is Zn(2+).

Functionally, negatively regulates transcription of bacterial ribonucleotide reductase nrd genes and operons by binding to NrdR-boxes. The polypeptide is Transcriptional repressor NrdR (Clostridium botulinum (strain Eklund 17B / Type B)).